We begin with the raw amino-acid sequence, 43 residues long: AEVNPPEAFNQDVDTYLKIFRNGRYPLDKMAVICSQTGFKLDK.

This sequence belongs to the protease inhibitor I13 (potato type I serine protease inhibitor) family. In terms of assembly, heterodimer of an A chain and a B chain, linked by a disulfide bond.

Its function is as follows. Inhibitor of chymotrypsin. This chain is Cytin chain A, found in Theromyzon tessulatum (Duck leech).